We begin with the raw amino-acid sequence, 211 residues long: Large ribosomal subunit protein uL3 (211 aa).

Positions 116–142 are disordered; the sequence is GTSGVMKKHGFSGNRASHGVSRNHRLG.

This sequence belongs to the universal ribosomal protein uL3 family. Part of the 50S ribosomal subunit. Forms a cluster with proteins L14 and L19.

Functionally, one of the primary rRNA binding proteins, it binds directly near the 3'-end of the 23S rRNA, where it nucleates assembly of the 50S subunit. The protein is Large ribosomal subunit protein uL3 of Fusobacterium nucleatum subsp. nucleatum (strain ATCC 25586 / DSM 15643 / BCRC 10681 / CIP 101130 / JCM 8532 / KCTC 2640 / LMG 13131 / VPI 4355).